The primary structure comprises 211 residues: Probable GTP-binding protein EngB (211 aa).

Residues 26-200 form the EngB-type G domain; it reads SGIEIAFAGR…RQKLDDWFAA (175 aa). Residues 34 to 41, 61 to 65, 79 to 82, 146 to 149, and 179 to 181 contribute to the GTP site; these read GRSNAGKS, GRTRL, DLPG, TKAD, and FSS. Mg(2+) contacts are provided by Ser41 and Thr63.

The protein belongs to the TRAFAC class TrmE-Era-EngA-EngB-Septin-like GTPase superfamily. EngB GTPase family. It depends on Mg(2+) as a cofactor.

Necessary for normal cell division and for the maintenance of normal septation. This Sodalis glossinidius (strain morsitans) protein is Probable GTP-binding protein EngB.